We begin with the raw amino-acid sequence, 75 residues long: Translational regulator CsrA (75 aa).

This sequence belongs to the CsrA/RsmA family. In terms of assembly, homodimer; the beta-strands of each monomer intercalate to form a hydrophobic core, while the alpha-helices form wings that extend away from the core.

It localises to the cytoplasm. A translational regulator that binds mRNA to regulate translation initiation and/or mRNA stability. Usually binds in the 5'-UTR at or near the Shine-Dalgarno sequence preventing ribosome-binding, thus repressing translation. Its main target seems to be the major flagellin gene, while its function is anatagonized by FliW. This chain is Translational regulator CsrA, found in Exiguobacterium sp. (strain ATCC BAA-1283 / AT1b).